Reading from the N-terminus, the 456-residue chain is CCA-adding enzyme (456 aa).

ATP is bound by residues Ser-53 and Lys-56. CTP is bound by residues Ser-53 and Lys-56. Mg(2+) contacts are provided by Asp-65, Asp-67, and Asp-119. Positions 142, 161, and 170 each coordinate ATP. Residues His-142, Lys-161, and Tyr-170 each contribute to the CTP site.

The protein belongs to the tRNA nucleotidyltransferase/poly(A) polymerase family. Archaeal CCA-adding enzyme subfamily. Homodimer. Mg(2+) serves as cofactor.

It catalyses the reaction a tRNA precursor + 2 CTP + ATP = a tRNA with a 3' CCA end + 3 diphosphate. The catalysed reaction is a tRNA with a 3' CCA end + 2 CTP + ATP = a tRNA with a 3' CCACCA end + 3 diphosphate. In terms of biological role, catalyzes the addition and repair of the essential 3'-terminal CCA sequence in tRNAs without using a nucleic acid template. Adds these three nucleotides in the order of C, C, and A to the tRNA nucleotide-73, using CTP and ATP as substrates and producing inorganic pyrophosphate. tRNA 3'-terminal CCA addition is required both for tRNA processing and repair. Also involved in tRNA surveillance by mediating tandem CCA addition to generate a CCACCA at the 3' terminus of unstable tRNAs. While stable tRNAs receive only 3'-terminal CCA, unstable tRNAs are marked with CCACCA and rapidly degraded. This Thermococcus kodakarensis (strain ATCC BAA-918 / JCM 12380 / KOD1) (Pyrococcus kodakaraensis (strain KOD1)) protein is CCA-adding enzyme.